A 74-amino-acid polypeptide reads, in one-letter code: Translational regulator CsrA (74 aa).

This sequence belongs to the CsrA/RsmA family. As to quaternary structure, homodimer; the beta-strands of each monomer intercalate to form a hydrophobic core, while the alpha-helices form wings that extend away from the core.

It localises to the cytoplasm. In terms of biological role, a translational regulator that binds mRNA to regulate translation initiation and/or mRNA stability. Usually binds in the 5'-UTR at or near the Shine-Dalgarno sequence preventing ribosome-binding, thus repressing translation. Its main target seems to be the major flagellin gene, while its function is anatagonized by FliW. The protein is Translational regulator CsrA of Alkaliphilus oremlandii (strain OhILAs) (Clostridium oremlandii (strain OhILAs)).